A 113-amino-acid polypeptide reads, in one-letter code: Large ribosomal subunit protein uL24 (113 aa).

The protein belongs to the universal ribosomal protein uL24 family. Part of the 50S ribosomal subunit.

Its function is as follows. One of two assembly initiator proteins, it binds directly to the 5'-end of the 23S rRNA, where it nucleates assembly of the 50S subunit. One of the proteins that surrounds the polypeptide exit tunnel on the outside of the subunit. The polypeptide is Large ribosomal subunit protein uL24 (Rickettsia prowazekii (strain Madrid E)).